We begin with the raw amino-acid sequence, 439 residues long: FK506-binding protein 59 (439 aa).

PPIase FKBP-type domains follow at residues 32 to 120 and 149 to 235; these read GCTV…LGWK and GAFV…VDCG. TPR repeat units follow at residues 252-285, 297-330, and 331-364; these read AKVY…LPTT, VATH…DKNN, and VKAL…EPGN.

As to quaternary structure, interacts with inaD and trpl, and may be part of the inaD signaling complex. Expression in the embryo is limited to three tissues: lymph glands, Garland cells and oenocyte cells.

It carries out the reaction [protein]-peptidylproline (omega=180) = [protein]-peptidylproline (omega=0). In terms of biological role, may have a role in phototransduction; inhibits or prevents Ca(2+) induced stimulation of the trpl ion channel. This Drosophila melanogaster (Fruit fly) protein is FK506-binding protein 59.